The sequence spans 191 residues: Elongation factor P (191 aa).

Lys-34 bears the N6-(3,6-diaminohexanoyl)-5-hydroxylysine mark.

The protein belongs to the elongation factor P family. In terms of processing, may be beta-lysylated on the epsilon-amino group of Lys-34 by the combined action of EpmA and EpmB, and then hydroxylated on the C5 position of the same residue by EpmC (if this protein is present). Lysylation is critical for the stimulatory effect of EF-P on peptide-bond formation. The lysylation moiety may extend toward the peptidyltransferase center and stabilize the terminal 3-CCA end of the tRNA. Hydroxylation of the C5 position on Lys-34 may allow additional potential stabilizing hydrogen-bond interactions with the P-tRNA.

The protein localises to the cytoplasm. It functions in the pathway protein biosynthesis; polypeptide chain elongation. Functionally, involved in peptide bond synthesis. Alleviates ribosome stalling that occurs when 3 or more consecutive Pro residues or the sequence PPG is present in a protein, possibly by augmenting the peptidyl transferase activity of the ribosome. Modification of Lys-34 is required for alleviation. The protein is Elongation factor P of Psychrobacter sp. (strain PRwf-1).